A 55-amino-acid polypeptide reads, in one-letter code: Large ribosomal subunit protein bL33 (55 aa).

The protein belongs to the bacterial ribosomal protein bL33 family.

This Novosphingobium aromaticivorans (strain ATCC 700278 / DSM 12444 / CCUG 56034 / CIP 105152 / NBRC 16084 / F199) protein is Large ribosomal subunit protein bL33.